The primary structure comprises 206 residues: Ribosomal RNA small subunit methyltransferase G (206 aa).

S-adenosyl-L-methionine-binding positions include G71, F76, 125-126 (IE), and R139.

It belongs to the methyltransferase superfamily. RNA methyltransferase RsmG family.

The protein localises to the cytoplasm. It carries out the reaction guanosine(527) in 16S rRNA + S-adenosyl-L-methionine = N(7)-methylguanosine(527) in 16S rRNA + S-adenosyl-L-homocysteine. Functionally, specifically methylates the N7 position of guanine in position 527 of 16S rRNA. The protein is Ribosomal RNA small subunit methyltransferase G of Cereibacter sphaeroides (strain ATCC 17029 / ATH 2.4.9) (Rhodobacter sphaeroides).